We begin with the raw amino-acid sequence, 211 residues long: Protein N-terminal glutamine amidohydrolase (211 aa).

Residues cysteine 24, histidine 78, and aspartate 94 contribute to the active site.

Belongs to the NTAQ1 family. As to quaternary structure, monomer.

It catalyses the reaction N-terminal L-glutaminyl-[protein] + H2O = N-terminal L-glutamyl-[protein] + NH4(+). Its function is as follows. Mediates the side-chain deamidation of N-terminal glutamine residues to glutamate, an important step in N-end rule pathway of protein degradation. Conversion of the resulting N-terminal glutamine to glutamate renders the protein susceptible to arginylation, polyubiquitination and degradation as specified by the N-end rule. Does not act on substrates with internal or C-terminal glutamine and does not act on non-glutamine residues in any position. This is Protein N-terminal glutamine amidohydrolase (tun) from Anopheles gambiae (African malaria mosquito).